Consider the following 253-residue polypeptide: Rab GTPase-activating protein 1-like, isoform 10 (253 aa).

Residues 8 to 222 are a coiled coil; it reads SMTFEERENR…MNEIQAAKNS (215 aa). The segment at 233–253 is disordered; sequence TATGTQPLQPAPVTQPPKEST.

In Homo sapiens (Human), this protein is Rab GTPase-activating protein 1-like, isoform 10 (RABGAP1L).